A 555-amino-acid chain; its full sequence is Glutamine--tRNA ligase (555 aa).

Positions 34–44 match the 'HIGH' region motif; it reads PEPNGFLHIGH. ATP contacts are provided by residues 35 to 37 and 41 to 47; these read EPN and HIGHAKS. Positions 67 and 212 each coordinate L-glutamine. Residues threonine 231, 261–262, and 269–271 each bind ATP; these read RL and LSK. The short motif at 268–272 is the 'KMSKS' region element; it reads VLSKR.

It belongs to the class-I aminoacyl-tRNA synthetase family. Monomer.

The protein localises to the cytoplasm. It carries out the reaction tRNA(Gln) + L-glutamine + ATP = L-glutaminyl-tRNA(Gln) + AMP + diphosphate. This chain is Glutamine--tRNA ligase, found in Alteromonas mediterranea (strain DSM 17117 / CIP 110805 / LMG 28347 / Deep ecotype).